The primary structure comprises 309 residues: tRNA pseudouridine synthase B (309 aa).

Asp-39 functions as the Nucleophile in the catalytic mechanism.

It belongs to the pseudouridine synthase TruB family. Type 1 subfamily.

The enzyme catalyses uridine(55) in tRNA = pseudouridine(55) in tRNA. In terms of biological role, responsible for synthesis of pseudouridine from uracil-55 in the psi GC loop of transfer RNAs. This is tRNA pseudouridine synthase B from Bacillus pumilus (strain SAFR-032).